Here is a 323-residue protein sequence, read N- to C-terminus: Elongation factor P--(R)-beta-lysine ligase (323 aa).

76 to 78 (SPE) provides a ligand contact to substrate. ATP is bound by residues 100-102 (RNE) and asparagine 109. Substrate is bound at residue tyrosine 118. An ATP-binding site is contributed by 242 to 243 (EL). Glutamate 249 is a substrate binding site. Glycine 298 provides a ligand contact to ATP.

It belongs to the class-II aminoacyl-tRNA synthetase family. EpmA subfamily. Homodimer.

The enzyme catalyses D-beta-lysine + L-lysyl-[protein] + ATP = N(6)-((3R)-3,6-diaminohexanoyl)-L-lysyl-[protein] + AMP + diphosphate + H(+). Its function is as follows. With EpmB is involved in the beta-lysylation step of the post-translational modification of translation elongation factor P (EF-P). Catalyzes the ATP-dependent activation of (R)-beta-lysine produced by EpmB, forming a lysyl-adenylate, from which the beta-lysyl moiety is then transferred to the epsilon-amino group of a conserved specific lysine residue in EF-P. The sequence is that of Elongation factor P--(R)-beta-lysine ligase from Haemophilus influenzae (strain PittGG).